The following is a 58-amino-acid chain: Preprotein translocase subunit SecG (58 aa).

Residues 1-32 (MARKRRKGGEGLVTAIGLVRFYEEVEEKIKVP) lie on the Cytoplasmic side of the membrane. The helical transmembrane segment at 33-54 (PEAVIGAAFALSIMTIALDLLL) threads the bilayer. The Extracellular segment spans residues 55–58 (KAAR).

This sequence belongs to the SEC61-beta family. In terms of assembly, component of the protein translocase complex. Heterotrimer consisting of alpha (SecY), beta (SecG) and gamma (SecE) subunits. Can form oligomers of the heterotrimer.

The protein resides in the cell membrane. In terms of biological role, involved in protein export. The function of the beta subunit is unknown, but it may be involved in stabilization of the trimeric complex. In Ignicoccus hospitalis (strain KIN4/I / DSM 18386 / JCM 14125), this protein is Preprotein translocase subunit SecG.